We begin with the raw amino-acid sequence, 812 residues long: cAMP-regulated phosphoprotein 21 (812 aa).

Residues 1-130 (MSEQGDLNQA…KDKTSEKPKI (130 aa)) are disordered. Position 2 is an N-acetylserine (S2). Over residues 9–25 (QAIAEEGGTEQETATPE) the composition is skewed to low complexity. Residues 32–58 (ESLDEEEKLELQRRLEAQNQERRKSKS) are a coiled coil. At S33 the chain carries Phosphoserine. The span at 40-53 (LELQRRLEAQNQER) shows a compositional bias: basic and acidic residues. S56 carries the phosphoserine modification. Low complexity predominate over residues 90–100 (IHLQLSSFSSL). Residues 102–130 (EEDKSRKDDSEREKEKDKNKDKTSEKPKI) show a composition bias toward basic and acidic residues. S134 carries the post-translational modification Phosphoserine. In terms of domain architecture, R3H spans 164–227 (RMILLKMEQE…SVIINKTSST (64 aa)). The SUZ domain occupies 228-300 (RIPEQRFCEH…VRERIFAHDS (73 aa)). A disordered region spans residues 246 to 281 (SQKRFILKRDNSSIDKEDNQQNRMHPFRDDRRSKSI). The residue at position 300 (S300) is a Phosphoserine. 3 disordered regions span residues 332–436 (RGNR…PLVS), 485–544 (HTGQ…MAGP), and 561–632 (LSRQ…QQPP). A compositionally biased stretch (low complexity) spans 339 to 349 (GRTSGSRQSSS). The segment covering 351 to 360 (NELKWSDHQR) has biased composition (basic and acidic residues). Positions 361–373 (AWSSTDSDSSNRN) are enriched in polar residues. A phosphoserine mark is found at S363 and S383. Positions 391-423 (TRGDSTSSTRSTGKLSKAGSESSSSAGSSGSLS) are enriched in low complexity. S562 is subject to Phosphoserine. Residues 582-602 (LMPQPAQQPSYVIASTGQQLP) are compositionally biased toward polar residues. The segment covering 619-632 (QPPPSPQGFVQQPP) has biased composition (pro residues). Position 655 is an asymmetric dimethylarginine (R655).

Interacts with CALM1. Post-translationally, phosphorylation at Ser-56 favors interaction with CALM1. Isoform 1 is methylated by CARM1 at Arg-655 in immature thymocytes. In terms of tissue distribution, isoform 2 is expressed in brain. Isoform 1 is present in immature thymocytes (at protein level).

The protein localises to the cytoplasm. Isoform 2 may act as a competitive inhibitor of calmodulin-dependent enzymes such as calcineurin in neurons. The chain is cAMP-regulated phosphoprotein 21 (ARPP21) from Homo sapiens (Human).